Reading from the N-terminus, the 144-residue chain is Large ribosomal subunit protein uL15 (144 aa).

The disordered stretch occupies residues 1 to 58 (MQLNDLRSAPGARREKLRPGRGIGSGLGKTGGRGHKGQTSRSGGKIAPGFEGGQQPLH). Residues 21 to 31 (RGIGSGLGKTG) are compositionally biased toward gly residues.

This sequence belongs to the universal ribosomal protein uL15 family. As to quaternary structure, part of the 50S ribosomal subunit.

Its function is as follows. Binds to the 23S rRNA. This Azotobacter vinelandii (strain DJ / ATCC BAA-1303) protein is Large ribosomal subunit protein uL15.